Here is a 566-residue protein sequence, read N- to C-terminus: NAD-dependent malic enzyme (566 aa).

Tyr105 serves as the catalytic Proton donor. NAD(+) is bound at residue Arg158. Residue Lys176 is the Proton acceptor of the active site. A divalent metal cation-binding residues include Glu247, Asp248, and Asp271. Positions 271 and 419 each coordinate NAD(+).

The protein belongs to the malic enzymes family. In terms of assembly, homotetramer. Mg(2+) is required as a cofactor. It depends on Mn(2+) as a cofactor.

The enzyme catalyses (S)-malate + NAD(+) = pyruvate + CO2 + NADH. The catalysed reaction is oxaloacetate + H(+) = pyruvate + CO2. The sequence is that of NAD-dependent malic enzyme from Acinetobacter baylyi (strain ATCC 33305 / BD413 / ADP1).